The chain runs to 835 residues: Peptide transporter family 1 (835 aa).

11 helical membrane passes run 86 to 106, 113 to 133, 150 to 170, 183 to 203, 222 to 242, 325 to 345, 368 to 388, 401 to 421, 697 to 717, 738 to 758, and 765 to 785; these read IFFN…SIVA, FWTI…LALA, GLLI…AFGG, LFFS…TFIS, FGIP…GSFW, MFLP…VWLI, LNAV…YPVA, VTGG…QLQV, ILWQ…FSIT, WLLT…LNLF, and FFVY…LSIF. A disordered region spans residues 814-835; the sequence is PRYSIDNKGFHPDEKDTFDMHF. The span at 821–835 shows a compositional bias: basic and acidic residues; sequence KGFHPDEKDTFDMHF.

It belongs to the major facilitator superfamily. Proton-dependent oligopeptide transporter (POT/PTR) (TC 2.A.17) family. In terms of tissue distribution, expressed specifically in the intestine.

The protein resides in the apical cell membrane. Low-affinity peptide transporter that is necessary for proton-dependent uptake of di- or tripeptides, and to a minor extent tetrapeptides, in the intestine. Transport is independent of sodium and chloride ions. Controls the uptake of dietary fatty acids, plays a role in fatty acid synthesis and is responsible for dipeptide-induced acidification of the intestine. Regulates cellular pH differences together with the antiporter protein, nhx-2. Amino acid uptake and absorption levels influence the insulin signaling/daf-2 and let-363/TOR pathways, subsequently affecting the stress response and longevity of the organism. It is required for the uptake of the L-enantiomers of various amino acids, including L-glutamate. In response to the availability of amino acid nutrients, may play a role in promoting reproduction and fertility. The chain is Peptide transporter family 1 from Caenorhabditis elegans.